Consider the following 247-residue polypeptide: Acidic 27 kDa endochitinase (247 aa).

Positions 1 to 16 are cleaved as a signal peptide; sequence MVLCCVFLLFLTGSFA. The Proton donor role is filled by Glu-84. The cysteines at positions 206 and 238 are disulfide-linked.

The protein belongs to the glycosyl hydrolase 19 family. Chitinase class II subfamily.

The protein localises to the secreted. The protein resides in the extracellular space. It carries out the reaction Random endo-hydrolysis of N-acetyl-beta-D-glucosaminide (1-&gt;4)-beta-linkages in chitin and chitodextrins.. Defense against chitin-containing fungal pathogens. The polypeptide is Acidic 27 kDa endochitinase (CHI17) (Solanum lycopersicum (Tomato)).